The chain runs to 292 residues: Phosphatidylserine decarboxylase proenzyme (292 aa).

Active-site charge relay system; for autoendoproteolytic cleavage activity residues include Asp98, His153, and Ser254. Ser254 functions as the Schiff-base intermediate with substrate; via pyruvic acid; for decarboxylase activity in the catalytic mechanism. Ser254 carries the pyruvic acid (Ser); by autocatalysis modification.

This sequence belongs to the phosphatidylserine decarboxylase family. PSD-B subfamily. Prokaryotic type I sub-subfamily. As to quaternary structure, heterodimer of a large membrane-associated beta subunit and a small pyruvoyl-containing alpha subunit. Pyruvate is required as a cofactor. Is synthesized initially as an inactive proenzyme. Formation of the active enzyme involves a self-maturation process in which the active site pyruvoyl group is generated from an internal serine residue via an autocatalytic post-translational modification. Two non-identical subunits are generated from the proenzyme in this reaction, and the pyruvate is formed at the N-terminus of the alpha chain, which is derived from the carboxyl end of the proenzyme. The autoendoproteolytic cleavage occurs by a canonical serine protease mechanism, in which the side chain hydroxyl group of the serine supplies its oxygen atom to form the C-terminus of the beta chain, while the remainder of the serine residue undergoes an oxidative deamination to produce ammonia and the pyruvoyl prosthetic group on the alpha chain. During this reaction, the Ser that is part of the protease active site of the proenzyme becomes the pyruvoyl prosthetic group, which constitutes an essential element of the active site of the mature decarboxylase.

Its subcellular location is the cell membrane. It catalyses the reaction a 1,2-diacyl-sn-glycero-3-phospho-L-serine + H(+) = a 1,2-diacyl-sn-glycero-3-phosphoethanolamine + CO2. The protein operates within phospholipid metabolism; phosphatidylethanolamine biosynthesis; phosphatidylethanolamine from CDP-diacylglycerol: step 2/2. Catalyzes the formation of phosphatidylethanolamine (PtdEtn) from phosphatidylserine (PtdSer). The polypeptide is Phosphatidylserine decarboxylase proenzyme (Halorhodospira halophila (strain DSM 244 / SL1) (Ectothiorhodospira halophila (strain DSM 244 / SL1))).